Consider the following 281-residue polypeptide: MKVNLMLKRGLATATATASSAPPKIKVGVLLSRIPIIKSELNELEKKYYEYQSELEKRLMWTFPAYFYFKKGTVAEHKFLSLQKGPISKKNGIWFPRGIPDIKHGRERSTKQEVKLSDDSTVAFSNNQKEQSKDDVNRPVIPNDRITEADRSNDMKSLERQLSRTLYLLVKDKSGTWKFPNFDLSDESKPLHVHAENELKLLSGDQIYTWSVSATPIGVLQDERNRTAEFIVKSHILAGKFDLVASKNDAFEDFAWLTKGEISEYVPKDYFNKTEFLLADN.

The transit peptide at 1 to 19 directs the protein to the mitochondrion; sequence MKVNLMLKRGLATATATAS. Basic and acidic residues predominate over residues 106–118; sequence RERSTKQEVKLSD. Residues 106-141 are disordered; it reads RERSTKQEVKLSDDSTVAFSNNQKEQSKDDVNRPVI. Over residues 119–129 the composition is skewed to polar residues; the sequence is DSTVAFSNNQK.

This sequence belongs to the mitochondrion-specific ribosomal protein mL46 family. In terms of assembly, component of the mitochondrial large ribosomal subunit (mt-LSU). Mature yeast 74S mitochondrial ribosomes consist of a small (37S) and a large (54S) subunit. The 37S small subunit contains a 15S ribosomal RNA (15S mt-rRNA) and 34 different proteins. The 54S large subunit contains a 21S rRNA (21S mt-rRNA) and 46 different proteins.

The protein localises to the mitochondrion. Component of the mitochondrial ribosome (mitoribosome), a dedicated translation machinery responsible for the synthesis of mitochondrial genome-encoded proteins, including at least some of the essential transmembrane subunits of the mitochondrial respiratory chain. The mitoribosomes are attached to the mitochondrial inner membrane and translation products are cotranslationally integrated into the membrane. This Saccharomyces cerevisiae (strain ATCC 204508 / S288c) (Baker's yeast) protein is Large ribosomal subunit protein mL46 (MRPL17).